The sequence spans 218 residues: Thiopurine S-methyltransferase (218 aa).

Residues W11, L46, E67, and R122 each contribute to the S-adenosyl-L-methionine site.

The protein belongs to the class I-like SAM-binding methyltransferase superfamily. TPMT family.

Its subcellular location is the cytoplasm. The catalysed reaction is S-adenosyl-L-methionine + a thiopurine = S-adenosyl-L-homocysteine + a thiopurine S-methylether.. The protein is Thiopurine S-methyltransferase of Vibrio cholerae serotype O1 (strain ATCC 39315 / El Tor Inaba N16961).